A 29-amino-acid chain; its full sequence is Glucagon (29 aa).

Phosphoserine is present on serine 2.

This sequence belongs to the glucagon family.

Its subcellular location is the secreted. Glucagon plays a key role in glucose metabolism and homeostasis. Regulates blood glucose by increasing gluconeogenesis and decreasing glycolysis. This chain is Glucagon (GCG), found in Oryctolagus cuniculus (Rabbit).